A 150-amino-acid chain; its full sequence is Large ribosomal subunit protein bL9 (150 aa).

Belongs to the bacterial ribosomal protein bL9 family.

Binds to the 23S rRNA. The polypeptide is Large ribosomal subunit protein bL9 (Corynebacterium glutamicum (strain ATCC 13032 / DSM 20300 / JCM 1318 / BCRC 11384 / CCUG 27702 / LMG 3730 / NBRC 12168 / NCIMB 10025 / NRRL B-2784 / 534)).